The primary structure comprises 723 residues: PX domain-containing protein EREL1 (723 aa).

Residues 1-12 (MMQRRSPPKHRH) show a composition bias toward basic residues. The segment at 1–26 (MMQRRSPPKHRHDGTSPLPLGMDWSP) is disordered. Residues 48–165 (YCVTIPSWIV…SFLELEAAAR (118 aa)) form the PX domain. Disordered stretches follow at residues 169 to 193 (QDVDQNASDSNNDRSSTSSSPMVHP) and 209 to 230 (YGSDTAYETSEVGSPSVGQDDI). Over residues 172 to 193 (DQNASDSNNDRSSTSSSPMVHP) the composition is skewed to low complexity. A compositionally biased stretch (polar residues) spans 209–225 (YGSDTAYETSEVGSPSV). 2 coiled-coil regions span residues 401–474 (NERL…LRQK) and 503–555 (KHVL…LEKE). The disordered stretch occupies residues 698 to 723 (DVKTTEDVNEENSDEKDEASRETLKR). Residues 704-714 (DVNEENSDEKD) are compositionally biased toward acidic residues.

It localises to the cytoplasm. The protein localises to the cytosol. It is found in the endosome membrane. Functionally, acts as an effector of RABF2A and RABF2B. Involved in vacuolar transport of storage proteins. Regulates membrane trafficking to protein storage vacuoles (PSVs). Binds specifically to phosphatidylinositol 3-monophosphate (PtdIns3P). The protein is PX domain-containing protein EREL1 of Arabidopsis thaliana (Mouse-ear cress).